A 177-amino-acid chain; its full sequence is ATP synthase subunit delta (177 aa).

This sequence belongs to the ATPase delta chain family. In terms of assembly, F-type ATPases have 2 components, F(1) - the catalytic core - and F(0) - the membrane proton channel. F(1) has five subunits: alpha(3), beta(3), gamma(1), delta(1), epsilon(1). F(0) has three main subunits: a(1), b(2) and c(10-14). The alpha and beta chains form an alternating ring which encloses part of the gamma chain. F(1) is attached to F(0) by a central stalk formed by the gamma and epsilon chains, while a peripheral stalk is formed by the delta and b chains.

It is found in the cell inner membrane. Functionally, f(1)F(0) ATP synthase produces ATP from ADP in the presence of a proton or sodium gradient. F-type ATPases consist of two structural domains, F(1) containing the extramembraneous catalytic core and F(0) containing the membrane proton channel, linked together by a central stalk and a peripheral stalk. During catalysis, ATP synthesis in the catalytic domain of F(1) is coupled via a rotary mechanism of the central stalk subunits to proton translocation. Its function is as follows. This protein is part of the stalk that links CF(0) to CF(1). It either transmits conformational changes from CF(0) to CF(1) or is implicated in proton conduction. This Pectobacterium atrosepticum (strain SCRI 1043 / ATCC BAA-672) (Erwinia carotovora subsp. atroseptica) protein is ATP synthase subunit delta.